A 444-amino-acid chain; its full sequence is Probable ribonuclease FAU-1 (444 aa).

Belongs to the FAU-1 family.

Functionally, probable RNase involved in rRNA stability through maturation and/or degradation of precursor rRNAs. Binds to RNA in loop regions with AU-rich sequences. The chain is Probable ribonuclease FAU-1 from Pyrobaculum arsenaticum (strain DSM 13514 / JCM 11321 / PZ6).